A 385-amino-acid chain; its full sequence is 1-deoxy-D-xylulose 5-phosphate reductoisomerase (385 aa).

NADPH-binding residues include Thr10, Gly11, Ser12, Ile13, Lys37, and Asn124. 1-deoxy-D-xylulose 5-phosphate is bound at residue Lys125. Glu126 contributes to the NADPH binding site. Asp150 contacts Mn(2+). 1-deoxy-D-xylulose 5-phosphate contacts are provided by Ser151, Glu152, Ser176, and His199. A Mn(2+)-binding site is contributed by Glu152. Gly205 is a binding site for NADPH. Residues Ser212, Asn217, Lys218, and Glu221 each contribute to the 1-deoxy-D-xylulose 5-phosphate site. Residue Glu221 coordinates Mn(2+).

The protein belongs to the DXR family. It depends on Mg(2+) as a cofactor. Requires Mn(2+) as cofactor.

The enzyme catalyses 2-C-methyl-D-erythritol 4-phosphate + NADP(+) = 1-deoxy-D-xylulose 5-phosphate + NADPH + H(+). Its pathway is isoprenoid biosynthesis; isopentenyl diphosphate biosynthesis via DXP pathway; isopentenyl diphosphate from 1-deoxy-D-xylulose 5-phosphate: step 1/6. Functionally, catalyzes the NADPH-dependent rearrangement and reduction of 1-deoxy-D-xylulose-5-phosphate (DXP) to 2-C-methyl-D-erythritol 4-phosphate (MEP). The chain is 1-deoxy-D-xylulose 5-phosphate reductoisomerase from Clostridium novyi (strain NT).